The primary structure comprises 111 residues: Probable 4-amino-4-deoxy-L-arabinose-phosphoundecaprenol flippase subunit ArnE (111 aa).

The next 3 helical transmembrane spans lie at 36-56 (IVLW…LWLL), 61-81 (VPVG…TLAA), and 88-108 (PVSP…VILG). In terms of domain architecture, EamA spans 40 to 109 (LGLALACLGL…IIGGIVILGS (70 aa)).

Belongs to the ArnE family. Heterodimer of ArnE and ArnF.

It is found in the cell inner membrane. Its pathway is bacterial outer membrane biogenesis; lipopolysaccharide biosynthesis. In terms of biological role, translocates 4-amino-4-deoxy-L-arabinose-phosphoundecaprenol (alpha-L-Ara4N-phosphoundecaprenol) from the cytoplasmic to the periplasmic side of the inner membrane. The sequence is that of Probable 4-amino-4-deoxy-L-arabinose-phosphoundecaprenol flippase subunit ArnE from Shigella flexneri.